Reading from the N-terminus, the 634-residue chain is GTP-binding protein 4 (634 aa).

Residue Ala-2 is modified to N-acetylalanine. Lys-103 carries the N6-acetyllysine; alternate modification. A Glycyl lysine isopeptide (Lys-Gly) (interchain with G-Cter in SUMO2); alternate cross-link involves residue Lys-103. The residue at position 122 (Ser-122) is a Phosphoserine. The region spanning 169–340 (RTLLLCGYPN…VKTEACDRLL (172 aa)) is the OBG-type G domain. GTP is bound by residues 175-182 (GYPNVGKS), 221-225 (DTPGI), and 289-292 (NKCD). Lys-332 participates in a covalent cross-link: Glycyl lysine isopeptide (Lys-Gly) (interchain with G-Cter in SUMO2). Residues Ser-468, Ser-470, and Ser-472 each carry the phosphoserine modification. The disordered stretch occupies residues 495–517 (ILESKEKNTQGPRMPRTAKKVQR). Position 522 is an N6-acetyllysine (Lys-522). The segment at 529–634 (VDMDDKDDAH…KRKAGKKDRR (106 aa)) is disordered. Lys-534 is covalently cross-linked (Glycyl lysine isopeptide (Lys-Gly) (interchain with G-Cter in SUMO2)). Basic residues predominate over residues 544-554 (RRSRSITRKRK). A Phosphoserine modification is found at Ser-558. Residues 560–572 (PPSSVARSGSCSR) show a composition bias toward polar residues. Basic and acidic residues predominate over residues 573–585 (TPRDVSGLRDVKM). Positions 586–604 (VKKAKTMMKNAQKKMNRLG) are enriched in basic residues. The span at 605–618 (KKGEADRHVFDMKP) shows a compositional bias: basic and acidic residues. The span at 619 to 634 (KHLLSGKRKAGKKDRR) shows a compositional bias: basic residues.

The protein belongs to the TRAFAC class OBG-HflX-like GTPase superfamily. OBG GTPase family. NOG subfamily. In terms of assembly, associates with pre-60S ribosomal particles. Interacts with MINAS-60 (product of an alternative open reading frame of RBM10).

It is found in the nucleus. The protein localises to the nucleolus. Functionally, involved in the biogenesis of the 60S ribosomal subunit. Acts as a TP53 repressor, preventing TP53 stabilization and cell cycle arrest. The chain is GTP-binding protein 4 from Homo sapiens (Human).